We begin with the raw amino-acid sequence, 223 residues long: uncharacterized protein (223 aa).

Over residues 1 to 11 (MLWVQRKRRRK) the composition is skewed to basic residues. The interval 1–37 (MLWVQRKRRRKETSECPSDKDKSPESHKAKNESWIKS) is disordered. Residues 12 to 37 (ETSECPSDKDKSPESHKAKNESWIKS) are compositionally biased toward basic and acidic residues. The residue at position 43 (serine 43) is a Phosphoserine. Disordered stretches follow at residues 49–73 (LDNN…SSTV) and 196–223 (THTF…NRRH). The segment covering 51–61 (NNASASGNATQ) has biased composition (polar residues). Positions 62–73 (TESGSEEVSSTV) are enriched in low complexity. Basic residues predominate over residues 202–223 (HSHHSHHGHPSHQSHSLPNRRH).

This is an uncharacterized protein from Homo sapiens (Human).